The sequence spans 206 residues: Large ribosomal subunit protein uL4 (206 aa).

The interval 43–78 (ARSGNRKQKDREEVKHTTKKPWRQKGTGRARAGMSS) is disordered. Basic and acidic residues predominate over residues 49 to 58 (KQKDREEVKH). The segment covering 59–70 (TTKKPWRQKGTG) has biased composition (basic residues).

Belongs to the universal ribosomal protein uL4 family. As to quaternary structure, part of the 50S ribosomal subunit.

Its function is as follows. One of the primary rRNA binding proteins, this protein initially binds near the 5'-end of the 23S rRNA. It is important during the early stages of 50S assembly. It makes multiple contacts with different domains of the 23S rRNA in the assembled 50S subunit and ribosome. Functionally, forms part of the polypeptide exit tunnel. The protein is Large ribosomal subunit protein uL4 of Ralstonia pickettii (strain 12J).